The sequence spans 291 residues: ATP synthase gamma chain (291 aa).

It belongs to the ATPase gamma chain family. F-type ATPases have 2 components, CF(1) - the catalytic core - and CF(0) - the membrane proton channel. CF(1) has five subunits: alpha(3), beta(3), gamma(1), delta(1), epsilon(1). CF(0) has three main subunits: a, b and c.

The protein localises to the cell inner membrane. In terms of biological role, produces ATP from ADP in the presence of a proton gradient across the membrane. The gamma chain is believed to be important in regulating ATPase activity and the flow of protons through the CF(0) complex. This chain is ATP synthase gamma chain, found in Ruegeria pomeroyi (strain ATCC 700808 / DSM 15171 / DSS-3) (Silicibacter pomeroyi).